The primary structure comprises 125 residues: Small ribosomal subunit protein mS41 (125 aa).

The transit peptide at 1–23 directs the protein to the mitochondrion; that stretch reads MLFRRLFSSSVIVQAASKTSLRK.

This sequence belongs to the mitochondrion-specific ribosomal protein mS41 family.

Its subcellular location is the mitochondrion. In terms of biological role, involved in telomere length regulation. This is Small ribosomal subunit protein mS41 (FYV4) from Kluyveromyces lactis (strain ATCC 8585 / CBS 2359 / DSM 70799 / NBRC 1267 / NRRL Y-1140 / WM37) (Yeast).